Here is a 199-residue protein sequence, read N- to C-terminus: Recombination protein RecR (199 aa).

A C4-type zinc finger spans residues 57 to 72; it reads CQSCRTYTEETLCPIC. A Toprim domain is found at 81–176; the sequence is STICVVETPA…MISRIAHGVP (96 aa).

Belongs to the RecR family.

Its function is as follows. May play a role in DNA repair. It seems to be involved in an RecBC-independent recombinational process of DNA repair. It may act with RecF and RecO. This is Recombination protein RecR from Shewanella baltica (strain OS195).